The sequence spans 244 residues: DNA repair protein RecO (244 aa).

It belongs to the RecO family.

In terms of biological role, involved in DNA repair and RecF pathway recombination. This is DNA repair protein RecO from Myxococcus xanthus (strain DK1622).